Consider the following 563-residue polypeptide: Ras and Rab interactor-like protein (563 aa).

A disordered region spans residues 181-208 (GWGTETPQQTEPETGQKYSLAPRKPTPH). Residues 184–196 (TETPQQTEPETGQ) are compositionally biased toward low complexity. One can recognise a VPS9 domain in the interval 381-518 (AQELRRLRRR…IAHYQPDTGR (138 aa)). The tract at residues 539–563 (TLHQQAQPTAQANQPFEEPWAIGDP) is disordered. Low complexity predominate over residues 542 to 553 (QQAQPTAQANQP).

In terms of assembly, interacts with RAB5A, RAB22A and MUSK. As to expression, detected in thymus and spleen (at protein level). Detected in lung, liver, kidney, spleen, thymus and skeletal muscle.

It localises to the cell projection. It is found in the ruffle. The protein resides in the cytoplasmic vesicle. In terms of biological role, guanine nucleotide exchange factor (GEF) for RAB5A and RAB22A that activates RAB5A and RAB22A by exchanging bound GDP for free GTP. Plays a role in endocytosis via its role in activating Rab family members. This Mus musculus (Mouse) protein is Ras and Rab interactor-like protein (Rinl).